The sequence spans 550 residues: Carboxypeptidase Y homolog A (550 aa).

The N-terminal stretch at 1–18 (MKSLVLGLLVGSAIASGP) is a signal peptide. Positions 19–131 (LQHVLHAPPE…KLAQYDLRIR (113 aa)) are excised as a propeptide. Cystine bridges form between cysteine 185–cysteine 424, cysteine 319–cysteine 333, cysteine 343–cysteine 366, cysteine 350–cysteine 359, and cysteine 388–cysteine 394. Asparagine 216 carries N-linked (GlcNAc...) asparagine glycosylation. Serine 272 is an active-site residue. Aspartate 463 is an active-site residue. N-linked (GlcNAc...) asparagine glycans are attached at residues asparagine 493 and asparagine 514. Histidine 525 is an active-site residue.

This sequence belongs to the peptidase S10 family.

The protein localises to the vacuole. The enzyme catalyses Release of a C-terminal amino acid with broad specificity.. In terms of biological role, vacuolar carboxypeptidase involved in degradation of small peptides. Digests preferentially peptides containing an aliphatic or hydrophobic residue in P1' position, as well as methionine, leucine or phenylalanine in P1 position of ester substrate. The sequence is that of Carboxypeptidase Y homolog A (CPYA) from Paracoccidioides lutzii (strain ATCC MYA-826 / Pb01) (Paracoccidioides brasiliensis).